The sequence spans 424 residues: Adenylosuccinate synthetase (424 aa).

GTP-binding positions include Gly12 to Lys18 and Gly40 to Thr42. Asp13 (proton acceptor) is an active-site residue. Residues Asp13 and Gly40 each contribute to the Mg(2+) site. IMP is bound by residues Asp13–Lys16, Asn38–His41, Thr128, Arg142, Gln223, Thr238, and Arg302. The Proton donor role is filled by His41. Residue Thr298–Arg304 participates in substrate binding. Residues Arg304, His330–Asp332, and Gly412–Gly414 each bind GTP.

This sequence belongs to the adenylosuccinate synthetase family. Homodimer. The cofactor is Mg(2+).

Its subcellular location is the cytoplasm. It catalyses the reaction IMP + L-aspartate + GTP = N(6)-(1,2-dicarboxyethyl)-AMP + GDP + phosphate + 2 H(+). It participates in purine metabolism; AMP biosynthesis via de novo pathway; AMP from IMP: step 1/2. In terms of biological role, plays an important role in the de novo pathway of purine nucleotide biosynthesis. Catalyzes the first committed step in the biosynthesis of AMP from IMP. This is Adenylosuccinate synthetase from Acetivibrio thermocellus (strain ATCC 27405 / DSM 1237 / JCM 9322 / NBRC 103400 / NCIMB 10682 / NRRL B-4536 / VPI 7372) (Clostridium thermocellum).